Here is a 117-residue protein sequence, read N- to C-terminus: MTRIRRGYIARRRRTKIRLFASTFRGAHSRLTRTTTQQKMRALVSAHRDRGRQKRNFRRLWITRINAVIRENKVSYSYSRLIHDLYKRQLLLNRKILAQIAISNRNCLYMISNEIIK.

It belongs to the bacterial ribosomal protein bL20 family.

It is found in the plastid. The protein resides in the chloroplast. Binds directly to 23S ribosomal RNA and is necessary for the in vitro assembly process of the 50S ribosomal subunit. It is not involved in the protein synthesizing functions of that subunit. The chain is Large ribosomal subunit protein bL20c from Platanus occidentalis (Sycamore).